Here is a 504-residue protein sequence, read N- to C-terminus: L-carnitine/gamma-butyrobetaine antiporter (504 aa).

The next 12 membrane-spanning stretches (helical) occupy residues 10–30, 51–71, 92–112, 143–163, 195–215, 231–251, 263–283, 316–336, 347–367, 398–418, 446–466, and 475–495; these read IEPK…WLTV, WGWA…WLVF, IFMM…SIEI, GPLP…FFFV, FYLV…TPLV, LDAI…ACGL, SYLS…SFIM, WTVF…IFLA, LCFG…TVLG, WAAL…CFIA, LLVR…LLAL, and AIIA…LSFI.

Belongs to the BCCT transporter (TC 2.A.15) family. CaiT subfamily. As to quaternary structure, homotrimer.

It localises to the cell inner membrane. It carries out the reaction 4-(trimethylamino)butanoate(in) + (R)-carnitine(out) = 4-(trimethylamino)butanoate(out) + (R)-carnitine(in). It functions in the pathway amine and polyamine metabolism; carnitine metabolism. Its function is as follows. Catalyzes the exchange of L-carnitine for gamma-butyrobetaine. The sequence is that of L-carnitine/gamma-butyrobetaine antiporter from Escherichia coli (strain ATCC 8739 / DSM 1576 / NBRC 3972 / NCIMB 8545 / WDCM 00012 / Crooks).